Consider the following 255-residue polypeptide: Tritrans,polycis-undecaprenyl-diphosphate synthase (geranylgeranyl-diphosphate specific) (255 aa).

Asp34 is a catalytic residue. Asp34 serves as a coordination point for Mg(2+). Residues 35-38, His51, and 79-81 contribute to the substrate site; these read GNRR and STE. Asn82 functions as the Proton acceptor in the catalytic mechanism. Residues Phe83, Arg85, Arg204, and 210 to 212 each bind substrate; that span reads RIS. Residue Glu223 participates in Mg(2+) binding.

Belongs to the UPP synthase family. As to quaternary structure, homodimer. Requires Mg(2+) as cofactor.

The enzyme catalyses geranylgeranyl diphosphate + 7 isopentenyl diphosphate = tri-trans,hepta-cis-undecaprenyl diphosphate + 7 diphosphate. Catalyzes the sequential condensation of isopentenyl diphosphate (IPP) with geranylgeranyl diphosphate (GGPP) to yield (2Z,6Z,10Z,14Z,18Z,22Z,26Z,30E,34E,38E)-undecaprenyl diphosphate (tritrans,heptacis-UPP). It is probably the precursor of glycosyl carrier lipids. In Picrophilus torridus (strain ATCC 700027 / DSM 9790 / JCM 10055 / NBRC 100828 / KAW 2/3), this protein is Tritrans,polycis-undecaprenyl-diphosphate synthase (geranylgeranyl-diphosphate specific).